Here is a 625-residue protein sequence, read N- to C-terminus: E3 ubiquitin-protein ligase synoviolin (625 aa).

At 1-4 (MVRA) the chain is on the cytoplasmic side. The chain crosses the membrane as a helical span at residues 5–25 (ALVTATSLALTGAVVAHAYFL). The Lumenal segment spans residues 26 to 40 (KHQFYPTVVYLTKSS). A helical membrane pass occupies residues 41–61 (PSMAVLYIQAFVLVFLLGKLM). Topologically, residues 62 to 98 (RKVFFGQLRAAEMEHLIERSWYAVTETCLAFTVFRDD) are cytoplasmic. The chain crosses the membrane as a helical span at residues 99–119 (FSPRFVALFTLLLFLKCFHWL). Topologically, residues 120–135 (AEDRVDFMERSPNISW) are lumenal. The helical transmembrane segment at 136 to 156 (VFHFRVLSLMVLLGVMDFLFV) threads the bilayer. The Cytoplasmic segment spans residues 157–169 (NHACHSIITRGAS). Residues 170–190 (VQLVFGFEYAILMTMVLTTFI) traverse the membrane as a helical segment. Over 191–212 (KYTLHTIDLQSENPWDNKAVYM) the chain is Lumenal. The chain crosses the membrane as a helical span at residues 213–235 (LYTELFTGFIKVLLYMAFMTIMI). The interaction with p53/TP53 stretch occupies residues 236–270 (KVHTFPLFAIRPMYLAMRQFKKAVTDAIMSRRAIR). Residues 236–625 (KVHTFPLFAI…GNLLKLASVN (390 aa)) lie on the Cytoplasmic side of the membrane. The Zn(2+) site is built by C291, C294, C307, H309, H312, C315, C326, and C329. Residues 291 to 330 (CIICREEMVTGAKKLPCNHIFHSSCLRSWFQRQQTCPTCR) form an RING-type; atypical zinc finger. Disordered regions lie at residues 337 to 361 (SQPN…NAPI), 390 to 434 (PPPA…SAAP), 462 to 487 (FMSS…LEQE), and 523 to 625 (LSPP…ASVN). Residues 342–361 (TPAPPAAQAPAPPAPANAPI) are compositionally biased toward pro residues. Low complexity predominate over residues 423-434 (AQSTAEAASAAP). Pro residues predominate over residues 462 to 471 (FMSSMPPPPS). Over residues 523–564 (LSPPRSETNTGETSESANVESSPSTANTETAGQEIQSQSGES) the composition is skewed to polar residues.

Belongs to the HRD1 family. In terms of assembly, homodimer.

It is found in the endoplasmic reticulum membrane. The enzyme catalyses S-ubiquitinyl-[E2 ubiquitin-conjugating enzyme]-L-cysteine + [acceptor protein]-L-lysine = [E2 ubiquitin-conjugating enzyme]-L-cysteine + N(6)-ubiquitinyl-[acceptor protein]-L-lysine.. Its pathway is protein modification; protein ubiquitination. Functionally, E3 ubiquitin-protein ligase which accepts ubiquitin specifically from endoplasmic reticulum-associated UBC7 E2 ligase and transfers it to substrates, promoting their degradation. Component of the endoplasmic reticulum quality control (ERQC) system also called ER-associated degradation (ERAD) involved in ubiquitin-dependent degradation of misfolded endoplasmic reticulum proteins. Also promotes the degradation of normal but naturally short-lived proteins. Protects cells from ER stress-induced apoptosis. Sequesters p53 in the cytoplasm and promotes its degradation, thereby negatively regulating its biological function in transcription, cell cycle regulation and apoptosis. This Danio rerio (Zebrafish) protein is E3 ubiquitin-protein ligase synoviolin (syvn1).